Reading from the N-terminus, the 505-residue chain is Katanin p60 ATPase-containing subunit A-like 2 (505 aa).

The 33-residue stretch at 25–57 (RRKNLLILIMHYLLQEGYVDSANSLEQETKISS) folds into the LisH domain. Disordered regions lie at residues 94 to 127 (LDHDSRVQPKPRSAGKLRRAGSNSTQGLPRIGQQ) and 140 to 167 (RTNGHQKALSRENSKQESGGNSPQEASE). Polar residues-rich tracts occupy residues 114–127 (GSNSTQGLPRIGQQ) and 155–164 (QESGGNSPQE). 298–305 (GPPGTGKT) is an ATP binding site.

Belongs to the AAA ATPase family. Katanin p60 subunit A1 subfamily. A-like 2 sub-subfamily.

The protein localises to the cytoplasm. It is found in the cytoskeleton. The protein resides in the spindle. It localises to the spindle pole. It carries out the reaction n ATP + n H2O + a microtubule = n ADP + n phosphate + (n+1) alpha/beta tubulin heterodimers.. Severs microtubules in vitro in an ATP-dependent manner. This activity may promote rapid reorganization of cellular microtubule arrays. The polypeptide is Katanin p60 ATPase-containing subunit A-like 2 (katnal2) (Xenopus laevis (African clawed frog)).